Consider the following 128-residue polypeptide: uncharacterized protein (128 aa).

This is an uncharacterized protein from Enterobacteria phage T4 (Bacteriophage T4).